Consider the following 186-residue polypeptide: MLILLDQDGVLADFEHAFIDAWRKRHPDIEPVAFKDRKSFHIREDYAPELRGLAEAIYTAPGFIRDLPPVPGAIEAFRELLALGMDVRICSSPLMQFENCVAEKYLWVERHLGREATQRLILTRDKTLVQGDLLIDDRPVITGAARPRWRHIIYDAPYNRDQTDRPRLDWRNWRNVLAGELYRSDA.

Catalysis depends on D6, which acts as the Nucleophile. Mg(2+)-binding residues include D6, D8, and D137. D8 serves as the catalytic Proton donor.

This sequence belongs to the 5'(3')-deoxyribonucleotidase family. Mg(2+) serves as cofactor.

Dephosphorylates the 5' and 2'(3')-phosphates of deoxyribonucleotides. This Bordetella bronchiseptica (strain ATCC BAA-588 / NCTC 13252 / RB50) (Alcaligenes bronchisepticus) protein is Putative 5'(3')-deoxyribonucleotidase.